Here is a 501-residue protein sequence, read N- to C-terminus: Probable sucrose utilization protein SUC1 (501 aa).

A DNA-binding region (zn(2)-C6 fungal-type) is located at residues 13 to 39 (CDSCSFRKVKCDMKTPCSRCVLNNLKC).

This sequence belongs to the MAL13 family.

It localises to the nucleus. Affects sucrose utilization and alpha-glucosidase activity. Probable transcriptional activator. The chain is Probable sucrose utilization protein SUC1 (SUC1) from Candida albicans (strain SC5314 / ATCC MYA-2876) (Yeast).